The sequence spans 538 residues: Mitochondrial distribution and morphology protein 34 (538 aa).

The 224-residue stretch at 1–224 folds into the SMP-LTD domain; that stretch reads MSFRFDRSVF…LPTALFNMSQ (224 aa). Disordered regions lie at residues 26–55 and 231–251; these read ALNP…RKSG and DGSR…NQPS.

Belongs to the MDM34 family. In terms of assembly, component of the ER-mitochondria encounter structure (ERMES) or MDM complex, composed of MMM1, MDM10, MDM12 and MDM34.

The protein localises to the mitochondrion outer membrane. Functionally, component of the ERMES/MDM complex, which serves as a molecular tether to connect the endoplasmic reticulum (ER) and mitochondria. Components of this complex are involved in the control of mitochondrial shape and protein biogenesis, and function in nonvesicular lipid trafficking between the ER and mitochondria. MDM34 is required for the interaction of the ER-resident membrane protein MMM1 and the outer mitochondrial membrane-resident beta-barrel protein MDM10. In Candida glabrata (strain ATCC 2001 / BCRC 20586 / JCM 3761 / NBRC 0622 / NRRL Y-65 / CBS 138) (Yeast), this protein is Mitochondrial distribution and morphology protein 34.